The sequence spans 424 residues: Probable serine/threonine-protein kinase PBL12 (424 aa).

Residues 88–368 (FSRSNMLGEG…CEVVKVLESI (281 aa)) form the Protein kinase domain. Residues 94–102 (LGEGGFGPV) and Lys-123 each bind ATP. The Proton acceptor role is filled by Asp-218.

The protein belongs to the protein kinase superfamily. Ser/Thr protein kinase family. In terms of tissue distribution, expressed specifically in roots.

It is found in the cell membrane. The catalysed reaction is L-seryl-[protein] + ATP = O-phospho-L-seryl-[protein] + ADP + H(+). The enzyme catalyses L-threonyl-[protein] + ATP = O-phospho-L-threonyl-[protein] + ADP + H(+). Functionally, may play a role in the signal transduction pathway of osmotic stress. May be involved in plant defense signaling. The sequence is that of Probable serine/threonine-protein kinase PBL12 from Arabidopsis thaliana (Mouse-ear cress).